A 309-amino-acid polypeptide reads, in one-letter code: MIRIGTRGSLLATTQAATVRDALIAGGHSAELVTISTEGDRSMAPIASLGVGVFTTALREAMEAGLVDAAVHSYKDLPTAADPRFTVAAIPPRNDPRDAVVARDGLTLGELPVGSLVGTSSPRRAAQLRALGLGLEIRPLRGNLDTRLNKVSSGDLDAIVVARAGLARLGRLDDVTETLEPVQMLPAPAQGALAVECRAGDSRLVAVLAELDDADTRAAVTAERALLADLEAGCSAPVGAIAEVVESIDEDGRVFEELSLRGCVAALDGSDVIRASGIGSCGRARELGLSVAAELFELGARELMWGVRH.

Cysteine 234 is modified (S-(dipyrrolylmethanemethyl)cysteine).

This sequence belongs to the HMBS family. In terms of assembly, monomer. Requires dipyrromethane as cofactor.

It carries out the reaction 4 porphobilinogen + H2O = hydroxymethylbilane + 4 NH4(+). Its pathway is porphyrin-containing compound metabolism; protoporphyrin-IX biosynthesis; coproporphyrinogen-III from 5-aminolevulinate: step 2/4. Its function is as follows. Tetrapolymerization of the monopyrrole PBG into the hydroxymethylbilane pre-uroporphyrinogen in several discrete steps. The sequence is that of Porphobilinogen deaminase (hemC) from Mycobacterium bovis (strain ATCC BAA-935 / AF2122/97).